We begin with the raw amino-acid sequence, 506 residues long: Histidine ammonia-lyase (506 aa).

The segment at residues 144-146 (ASG) is a cross-link (5-imidazolinone (Ala-Gly)). Ser145 bears the 2,3-didehydroalanine (Ser) mark.

Belongs to the PAL/histidase family. Contains an active site 4-methylidene-imidazol-5-one (MIO), which is formed autocatalytically by cyclization and dehydration of residues Ala-Ser-Gly.

The protein localises to the cytoplasm. The catalysed reaction is L-histidine = trans-urocanate + NH4(+). The protein operates within amino-acid degradation; L-histidine degradation into L-glutamate; N-formimidoyl-L-glutamate from L-histidine: step 1/3. The chain is Histidine ammonia-lyase from Legionella pneumophila (strain Paris).